A 170-amino-acid polypeptide reads, in one-letter code: Large ribosomal subunit protein uL10 (170 aa).

This sequence belongs to the universal ribosomal protein uL10 family. As to quaternary structure, part of the ribosomal stalk of the 50S ribosomal subunit. The N-terminus interacts with L11 and the large rRNA to form the base of the stalk. The C-terminus forms an elongated spine to which L12 dimers bind in a sequential fashion forming a multimeric L10(L12)X complex.

Forms part of the ribosomal stalk, playing a central role in the interaction of the ribosome with GTP-bound translation factors. The protein is Large ribosomal subunit protein uL10 of Chlamydia caviae (strain ATCC VR-813 / DSM 19441 / 03DC25 / GPIC) (Chlamydophila caviae).